A 378-amino-acid polypeptide reads, in one-letter code: Spermidine/putrescine import ATP-binding protein PotA (378 aa).

The ABC transporter domain occupies 18–248 (VLLSGISKSF…PKNLFVAGFI (231 aa)). Position 50-57 (50-57 (GPSGCGKT)) interacts with ATP.

Belongs to the ABC transporter superfamily. Spermidine/putrescine importer (TC 3.A.1.11.1) family. The complex is composed of two ATP-binding proteins (PotA), two transmembrane proteins (PotB and PotC) and a solute-binding protein (PotD).

It is found in the cell inner membrane. It catalyses the reaction ATP + H2O + polyamine-[polyamine-binding protein]Side 1 = ADP + phosphate + polyamineSide 2 + [polyamine-binding protein]Side 1.. In terms of biological role, part of the ABC transporter complex PotABCD involved in spermidine/putrescine import. Responsible for energy coupling to the transport system. The sequence is that of Spermidine/putrescine import ATP-binding protein PotA from Salmonella paratyphi A (strain ATCC 9150 / SARB42).